The primary structure comprises 118 residues: Small ribosomal subunit protein uS13 (118 aa).

The tract at residues 94–118 (GLPLRGQRTKTNARTRKGRRKGTSS) is disordered.

It belongs to the universal ribosomal protein uS13 family. In terms of assembly, part of the 30S ribosomal subunit. Forms a loose heterodimer with protein S19. Forms two bridges to the 50S subunit in the 70S ribosome.

In terms of biological role, located at the top of the head of the 30S subunit, it contacts several helices of the 16S rRNA. In the 70S ribosome it contacts the 23S rRNA (bridge B1a) and protein L5 of the 50S subunit (bridge B1b), connecting the 2 subunits; these bridges are implicated in subunit movement. Contacts the tRNAs in the A and P-sites. The protein is Small ribosomal subunit protein uS13 of Legionella pneumophila (strain Paris).